A 221-amino-acid polypeptide reads, in one-letter code: Ras-related protein Rab-27A (221 aa).

The residue at position 2 (serine 2) is an N-acetylserine. The residue at position 2 (serine 2) is a Phosphoserine. 16–24 (GDSGVGKTS) contacts GTP. Positions 38-46 (FITTVGIDF) match the Effector region motif. Residues 74-78 (DTAGQ), 133-136 (NKSD), and 163-165 (SAA) each bind GTP. A disulfide bridge connects residues cysteine 123 and cysteine 188. Positions 202 to 221 (NGHTSADPLNEEKEKGSCGC) are disordered. Residues 211 to 221 (NEEKEKGSCGC) show a composition bias toward basic and acidic residues. 2 S-geranylgeranyl cysteine lipidation sites follow: cysteine 219 and cysteine 221. A Cysteine methyl ester modification is found at cysteine 221.

The protein belongs to the small GTPase superfamily. Rab family. As to quaternary structure, binds SYTL1, SLAC2B, MYRIP, SYTL3, SYTL4 and SYTL5. Interacts with RPH3A and RPH3A. Binds MLPH and SYTL2. Interacts with UNC13D. Does not interact with the BLOC-3 complex (heterodimer of HPS1 and HPS4). Interacts (GDP-bound form preferentially) with DENND10.

The protein localises to the membrane. It localises to the melanosome. It is found in the late endosome. The protein resides in the lysosome. It carries out the reaction GTP + H2O = GDP + phosphate + H(+). Regulated by guanine nucleotide exchange factors (GEFs) which promote the exchange of bound GDP for free GTP, GTPase activating proteins (GAPs) which increase the GTP hydrolysis activity, and GDP dissociation inhibitors which inhibit the dissociation of the nucleotide from the GTPase. Activated by GEFs such as DENND10. In terms of biological role, small GTPase which cycles between active GTP-bound and inactive GDP-bound states. In its active state, binds to a variety of effector proteins to regulate homeostasis of late endocytic pathway, including endosomal positioning, maturation and secretion. Plays a role in cytotoxic granule exocytosis in lymphocytes. Required for both granule maturation and granule docking and priming at the immunologic synapse. In Sus scrofa (Pig), this protein is Ras-related protein Rab-27A (RAB27A).